A 137-amino-acid chain; its full sequence is MSQQSQVIITYARRKMARARCYITPGKGRVFVNDIPLEIIPMEVVRMKIMEPLLLAGEKISSSIDAKIYVEGGGVMGQADAARMALARALVKFTGSKELEEIYKVYDRTMLAGDPRQTESEKWMRYSARRWRQKAYR.

Belongs to the universal ribosomal protein uS9 family.

This is Small ribosomal subunit protein uS9 (rps9) from Sulfurisphaera tokodaii (strain DSM 16993 / JCM 10545 / NBRC 100140 / 7) (Sulfolobus tokodaii).